Consider the following 436-residue polypeptide: Trigger factor (436 aa).

The 86-residue stretch at 163 to 248 folds into the PPIase FKBP-type domain; it reads GDRVTVDFEG…VKKIEAAHLP (86 aa).

It belongs to the FKBP-type PPIase family. Tig subfamily.

It localises to the cytoplasm. The catalysed reaction is [protein]-peptidylproline (omega=180) = [protein]-peptidylproline (omega=0). Its function is as follows. Involved in protein export. Acts as a chaperone by maintaining the newly synthesized protein in an open conformation. Functions as a peptidyl-prolyl cis-trans isomerase. This is Trigger factor from Acidovorax ebreus (strain TPSY) (Diaphorobacter sp. (strain TPSY)).